The chain runs to 562 residues: Endochitinase (562 aa).

The N-terminal stretch at Met-1–Ala-20 is a signal peptide. One can recognise a GH18 domain in the interval Thr-27–Ala-311. Glu-157 functions as the Proton donor in the catalytic mechanism. 2 disordered regions span residues Thr-329–Thr-358 and Thr-461–Thr-484. Positions Ser-481–Phe-562 are chitin-binding, high affinity. Residue Asn-553 is glycosylated (N-linked (GlcNAc...) asparagine).

It belongs to the glycosyl hydrolase 18 family. Chitinase class V subfamily. Post-translationally, extensively glycosylated with a series of short O-linked mannose oligosaccharides ranging in size from Man(2) to Man(5).

The protein localises to the secreted. The protein resides in the cell wall. The catalysed reaction is Random endo-hydrolysis of N-acetyl-beta-D-glucosaminide (1-&gt;4)-beta-linkages in chitin and chitodextrins.. Functionally, chitinase is required for cell separation during growth of S.cerevisiae. This chain is Endochitinase (CTS1), found in Saccharomyces cerevisiae (strain ATCC 204508 / S288c) (Baker's yeast).